The sequence spans 331 residues: MSRYLLPLSALGTVAGAAVLLKDYVTGGACPSKATIPGKTVIVTGANTGIGKQTALELARRGGNIILACRDMEKCEAAAKDIRGETLNHHVNARHLDLASLKSIREFAAKIIEEEERVDILINNAGVMRCPHWTTEDGFEMQFGVNHLGHFLLTNLLLDKLKASAPSRIINLSSLAHVAGHIDFDDLNWQTRKYNTKAAYCQSKLAIVLFTKELSRRLQGSGVTVNALHPGVARTELGRHTGIHGSTFSSTTLGPIFWLLVKSPELAAQPSTYLAVAEELADVSGKYFDGLKQKAPAPEAEDEEVARRLWAESARLVGLEAPSVREQPLPR.

Ser-2 is subject to N-acetylserine. Residue 45-51 (GANTGIG) participates in NADP(+) binding. Residue Ser-174 coordinates substrate. Residue Tyr-200 is the Proton acceptor of the active site. A Phosphoserine modification is found at Ser-323.

It belongs to the short-chain dehydrogenases/reductases (SDR) family. Widely expressed. In the retina, detected in the inner segment of the photoreceptor cells. Weak signals are observed in a small population of inner nuclear neurons and the inner plexiform layer.

It is found in the mitochondrion inner membrane. The catalysed reaction is all-trans-retinol + NADP(+) = all-trans-retinal + NADPH + H(+). It functions in the pathway cofactor metabolism; retinol metabolism. Its function is as follows. Retinol dehydrogenase with a clear preference for NADP. Oxidizes all-trans-retinol, but seems to reduce all-trans-retinal with much higher efficiency. Has no activity toward steroids. This is Retinol dehydrogenase 13 (RDH13) from Homo sapiens (Human).